Here is a 1242-residue protein sequence, read N- to C-terminus: Protein STU1 (1242 aa).

Composition is skewed to low complexity over residues 138 to 156 (LNSS…TATK) and 548 to 567 (AASP…PSSA). 6 disordered regions span residues 138–161 (LNSS…KPHE), 538–612 (KQLE…NPVF), 637–711 (HVET…LGLG), 748–839 (AEHE…NGNI), 853–884 (AFQT…RPEA), and 1077–1111 (HPAP…EKRT). Basic and acidic residues predominate over residues 574 to 593 (KKMDLKAMLAERRRAVKEAG). Composition is skewed to low complexity over residues 640–660 (TSSP…RIRP) and 701–711 (SPSLSPSLGLG). Residues 748–767 (AEHEVDELTLKEGQKTRDDG) are compositionally biased toward basic and acidic residues. Polar residues-rich tracts occupy residues 802 to 815 (QQGN…SGRV), 824 to 837 (ATGT…SRNG), and 856 to 871 (TPLN…SSAI). Positions 1082-1104 (SSSADNSDPMTSALSQLSLSSSK) are enriched in low complexity.

Belongs to the CLASP family. In terms of assembly, interacts with microtubules.

The protein resides in the cytoplasm. It localises to the cytoskeleton. Its subcellular location is the nucleus. The protein localises to the spindle. Functionally, microtubule binding protein that promotes the stabilization of dynamic microtubules. Required for mitotic spindle formation. The chain is Protein STU1 (STU1) from Cryptococcus neoformans var. neoformans serotype D (strain B-3501A) (Filobasidiella neoformans).